A 235-amino-acid chain; its full sequence is uncharacterized protein (235 aa).

Belongs to the UreF family.

The protein localises to the cytoplasm. It localises to the nucleus. Its function is as follows. Probably facilitates nickel incorporation. This is an uncharacterized protein from Schizosaccharomyces pombe (strain 972 / ATCC 24843) (Fission yeast).